Here is a 121-residue protein sequence, read N- to C-terminus: Large ribosomal subunit protein uL22 (121 aa).

Belongs to the universal ribosomal protein uL22 family. In terms of assembly, part of the 50S ribosomal subunit.

In terms of biological role, this protein binds specifically to 23S rRNA; its binding is stimulated by other ribosomal proteins, e.g. L4, L17, and L20. It is important during the early stages of 50S assembly. It makes multiple contacts with different domains of the 23S rRNA in the assembled 50S subunit and ribosome. Functionally, the globular domain of the protein is located near the polypeptide exit tunnel on the outside of the subunit, while an extended beta-hairpin is found that lines the wall of the exit tunnel in the center of the 70S ribosome. This is Large ribosomal subunit protein uL22 from Rickettsia massiliae (strain Mtu5).